The chain runs to 289 residues: Early E4 34 kDa protein (289 aa).

It belongs to the adenoviridae E4 30 to 34 kDa protein family. As to quaternary structure, interacts with E1B-55k.

The protein localises to the host nucleus. The protein resides in the host cytoplasm. Functionally, plays a major role to prevent cellular inhibition of viral genome replication by nuclear bodies. Assembles an SCF-like E3 ubiquitin ligase complex based on the cellular proteins ELOB, ELOC, CUL5 and RBX1, in cooperation with viral E1B-55K. This viral RING-type ligase ubiquitinates cellular substrates prior to proteasomal degradation: p53/TP53, LIG4, MRE11-RAD50-NBS1 (MRN) complex, ITGA3, DAXX and BLM. The chain is Early E4 34 kDa protein from Human adenovirus F serotype 40 (HAdV-40).